The following is a 157-amino-acid chain: MNIKLIAIGKTDNKNLQTLIDDYTKRLSFYIKFDLEIIADIKNVKNLSETQQKEKEGELILSKITPTDQLILLDENGKTFSSVAFSDQLQKKMNSGIKTLVFVIGGPYGFSDDVYKKTFGKISLSQMTFSHQMVRLFFIEQLYRGFTILKNEPYHHQ.

S-adenosyl-L-methionine contacts are provided by residues leucine 73, glycine 105, and 124-129; that span reads LSQMTF.

It belongs to the RNA methyltransferase RlmH family. As to quaternary structure, homodimer.

It localises to the cytoplasm. It carries out the reaction pseudouridine(1915) in 23S rRNA + S-adenosyl-L-methionine = N(3)-methylpseudouridine(1915) in 23S rRNA + S-adenosyl-L-homocysteine + H(+). In terms of biological role, specifically methylates the pseudouridine at position 1915 (m3Psi1915) in 23S rRNA. This chain is Ribosomal RNA large subunit methyltransferase H, found in Flavobacterium psychrophilum (strain ATCC 49511 / DSM 21280 / CIP 103535 / JIP02/86).